We begin with the raw amino-acid sequence, 145 residues long: D-aminoacyl-tRNA deacylase (145 aa).

The short motif at 137–138 (GP) is the Gly-cisPro motif, important for rejection of L-amino acids element.

It belongs to the DTD family. Homodimer.

It is found in the cytoplasm. The catalysed reaction is glycyl-tRNA(Ala) + H2O = tRNA(Ala) + glycine + H(+). It catalyses the reaction a D-aminoacyl-tRNA + H2O = a tRNA + a D-alpha-amino acid + H(+). Its function is as follows. An aminoacyl-tRNA editing enzyme that deacylates mischarged D-aminoacyl-tRNAs. Also deacylates mischarged glycyl-tRNA(Ala), protecting cells against glycine mischarging by AlaRS. Acts via tRNA-based rather than protein-based catalysis; rejects L-amino acids rather than detecting D-amino acids in the active site. By recycling D-aminoacyl-tRNA to D-amino acids and free tRNA molecules, this enzyme counteracts the toxicity associated with the formation of D-aminoacyl-tRNA entities in vivo and helps enforce protein L-homochirality. This is D-aminoacyl-tRNA deacylase from Erwinia tasmaniensis (strain DSM 17950 / CFBP 7177 / CIP 109463 / NCPPB 4357 / Et1/99).